A 147-amino-acid polypeptide reads, in one-letter code: Transmembrane protein 210 (147 aa).

Residues 1–31 (MAPCPQPESCPAGSPLGLICLSLLLIPASAG) form the signal peptide. Residues 32–47 (TYCECSLGLSREALIA) are Extracellular-facing. The helical transmembrane segment at 48-68 (LIVVLAGVSASCFCALVVVAI) threads the bilayer. Residues 69–147 (GVFRAKGDTC…PPPPPPPLPQ (79 aa)) are Cytoplasmic-facing. The disordered stretch occupies residues 128–147 (TMTAPLEPPPPPPPPPPLPQ). The span at 133–147 (LEPPPPPPPPPPLPQ) shows a compositional bias: pro residues.

Its subcellular location is the membrane. The protein resides in the cytoplasmic vesicle. It is found in the secretory vesicle. It localises to the acrosome. This chain is Transmembrane protein 210 (Tmem210), found in Mus musculus (Mouse).